The chain runs to 156 residues: Single-stranded DNA-binding protein 1 (156 aa).

In terms of domain architecture, SSB spans 1-107; it reads MNETMICAVG…IDAVAIGHDL (107 aa). A compositionally biased stretch (low complexity) spans 114–124; it reads FRRTARTEAST. Positions 114–156 are disordered; it reads FRRTARTEASTSPPRPEPNWEVPAGGTPGEPVPEQRPDPVPVG.

Homotetramer.

The sequence is that of Single-stranded DNA-binding protein 1 (ssb1) from Streptomyces coelicolor (strain ATCC BAA-471 / A3(2) / M145).